The chain runs to 175 residues: Co-chaperone protein HscB homolog (175 aa).

Positions 7–79 (SHFDLFHLPA…LKRASYLLSL (73 aa)) constitute a J domain.

The protein belongs to the HscB family. In terms of assembly, interacts with HscA and stimulates its ATPase activity.

Co-chaperone involved in the maturation of iron-sulfur cluster-containing proteins. Seems to help targeting proteins to be folded toward HscA. The sequence is that of Co-chaperone protein HscB homolog from Burkholderia cenocepacia (strain ATCC BAA-245 / DSM 16553 / LMG 16656 / NCTC 13227 / J2315 / CF5610) (Burkholderia cepacia (strain J2315)).